A 572-amino-acid polypeptide reads, in one-letter code: MVRATVLNVGDHASEGVRTNKAKGEKMVLEPPMNSAQRRKLGDITNLQNQKNLMNQGAKHQQQAILISSKENAENLQKENTKLMKVVMERDGIKSDLKKLRIEFQKVQEQNLLLAQANTRILAEFNTSKDQLKVLQHELGCKNGLVMARKMLLKEQTLPCTRHASKVKAQANACGGACKTFQPNDADHEHASGSSNANSLQRNEKANSKRRVSGRKNPANSEVLDIIGRSGETCQMEDNIDNKKLVSDSDNDAENHINDNVQSKRYCAGRQSSSSKTREASQTETLQKVVDAKEIKGDARFSLTKHSDWLKSQEPEPSESLYESRFPLRRRSARLKSQEPEPSESFHDSIETTKRRRSAIRSAMFNIQELGVIQNLNGLPDDQEIAAKARCSAREQSTGSKPEAVEPHDTKEIIGKSRISLRRQSARFNFQELGVTENLNGPHDDQTIAANARCCASEQSIGSKPEAVEPHDIEERIGKIRVSSRRQSANIETPRAIKEPANPPLHDDNVEESSQISCSVSMELKRESKKKPTGDESEEMRKTTVGRPSRQAAEKIKSYKEPSLKEKMRGGF.

Residues 59 to 110 (KHQQQAILISSKENAENLQKENTKLMKVVMERDGIKSDLKKLRIEFQKVQEQ) adopt a coiled-coil conformation. 4 disordered regions span residues 185 to 221 (DADH…PANS), 244 to 285 (KLVS…QTET), 333 to 352 (ARLK…SIET), and 484 to 572 (SRRQ…RGGF). The segment covering 192-201 (SGSSNANSLQ) has biased composition (polar residues). Basic and acidic residues-rich tracts occupy residues 244-257 (KLVS…ENHI), 336-352 (KSQE…SIET), 523-542 (ELKR…EMRK), and 552-572 (AAEK…RGGF).

The protein belongs to the shugoshin family.

Protects sister chromatid centromere cohesion in meiosis I but not through the protection of the cohesin SYN1. Required with SGO2 for full protection of centromeric cohesion during anaphase I. Required to prevent precocious release of pericentromeric cohesins during meiosis. Not necessary for the maintenance of the synaptonemal complex (SC). Not required for monopolar spindle orientation in meiosis I. This chain is SHUGOSHIN 1, found in Arabidopsis thaliana (Mouse-ear cress).